Reading from the N-terminus, the 218-residue chain is Glycerol-3-phosphate acyltransferase 2 (218 aa).

Helical transmembrane passes span 6–26 (YLLI…VLVG), 50–70 (VMGP…GTLA), 85–105 (LLLI…FLKF), 115–135 (AGVF…VFLP), and 159–179 (FWFH…LLFV).

The protein belongs to the PlsY family. In terms of assembly, probably interacts with PlsX.

The protein localises to the cell membrane. The enzyme catalyses an acyl phosphate + sn-glycerol 3-phosphate = a 1-acyl-sn-glycero-3-phosphate + phosphate. The protein operates within lipid metabolism; phospholipid metabolism. Catalyzes the transfer of an acyl group from acyl-phosphate (acyl-PO(4)) to glycerol-3-phosphate (G3P) to form lysophosphatidic acid (LPA). This enzyme utilizes acyl-phosphate as fatty acyl donor, but not acyl-CoA or acyl-ACP. The sequence is that of Glycerol-3-phosphate acyltransferase 2 from Lactobacillus johnsonii (strain CNCM I-12250 / La1 / NCC 533).